Here is a 489-residue protein sequence, read N- to C-terminus: Ribulose bisphosphate carboxylase large chain (489 aa).

Asparagine 128 and threonine 178 together coordinate substrate. Lysine 180 acts as the Proton acceptor in catalysis. Substrate is bound at residue lysine 182. Lysine 206, aspartate 208, and glutamate 209 together coordinate Mg(2+). Lysine 206 bears the N6-carboxylysine mark. Histidine 298 (proton acceptor) is an active-site residue. Substrate-binding residues include arginine 299, histidine 331, and serine 383.

This sequence belongs to the RuBisCO large chain family. Type I subfamily. In terms of assembly, heterohexadecamer of 8 large chains and 8 small chains. The cofactor is Mg(2+).

The enzyme catalyses 2 (2R)-3-phosphoglycerate + 2 H(+) = D-ribulose 1,5-bisphosphate + CO2 + H2O. The catalysed reaction is D-ribulose 1,5-bisphosphate + O2 = 2-phosphoglycolate + (2R)-3-phosphoglycerate + 2 H(+). Its function is as follows. RuBisCO catalyzes two reactions: the carboxylation of D-ribulose 1,5-bisphosphate, the primary event in carbon dioxide fixation, as well as the oxidative fragmentation of the pentose substrate. Both reactions occur simultaneously and in competition at the same active site. The protein is Ribulose bisphosphate carboxylase large chain of Nitrosospira multiformis (strain ATCC 25196 / NCIMB 11849 / C 71).